We begin with the raw amino-acid sequence, 803 residues long: Leucine--tRNA ligase (803 aa).

Positions Pro40–His51 match the 'HIGH' region motif. Residues Lys575–Ser579 carry the 'KMSKS' region motif. Lys578 is a binding site for ATP.

This sequence belongs to the class-I aminoacyl-tRNA synthetase family.

The protein resides in the cytoplasm. The catalysed reaction is tRNA(Leu) + L-leucine + ATP = L-leucyl-tRNA(Leu) + AMP + diphosphate. This is Leucine--tRNA ligase from Listeria monocytogenes serotype 4a (strain HCC23).